A 420-amino-acid chain; its full sequence is D-tagatose-1,6-bisphosphate aldolase subunit GatZ (420 aa).

This sequence belongs to the GatZ/KbaZ family. GatZ subfamily. In terms of assembly, forms a complex with GatY.

It functions in the pathway carbohydrate metabolism; D-tagatose 6-phosphate degradation; D-glyceraldehyde 3-phosphate and glycerone phosphate from D-tagatose 6-phosphate: step 2/2. Its function is as follows. Component of the tagatose-1,6-bisphosphate aldolase GatYZ that is required for full activity and stability of the Y subunit. Could have a chaperone-like function for the proper and stable folding of GatY. When expressed alone, GatZ does not show any aldolase activity. Is involved in the catabolism of galactitol. This Escherichia coli (strain SE11) protein is D-tagatose-1,6-bisphosphate aldolase subunit GatZ.